A 176-amino-acid polypeptide reads, in one-letter code: Ferredoxin-type protein NapF (176 aa).

2 consecutive 4Fe-4S ferredoxin-type domains span residues 39–68 (VENSIFVARCTRCGDCLSVCETNILVKGDA) and 71–100 (PEVRFDNGECTFCGKCVDACKQPIFYPRDQ). Positions 48, 51, 54, 58, 80, 83, 86, 90, 113, 121, 124, 128, 152, 155, 158, and 162 each coordinate [4Fe-4S] cluster. 4Fe-4S ferredoxin-type domains are found at residues 119–138 (IECRTCQDNCPANAIRFKLQ) and 143–172 (AQPLVNFDACNGCGACVQGCPVNAITMNDL).

The protein belongs to the NapF family. Interacts with the cytoplasmic NapA precursor. The cofactor is [4Fe-4S] cluster.

It localises to the cytoplasm. In terms of biological role, could be involved in the maturation of NapA, the catalytic subunit of the periplasmic nitrate reductase, before its export into the periplasm. The polypeptide is Ferredoxin-type protein NapF (Haemophilus influenzae (strain ATCC 51907 / DSM 11121 / KW20 / Rd)).